The primary structure comprises 754 residues: MSVVEIEDGVFESTATIDNGSFGTRTIRFEAGRLAQQAAGAVVAYLDDETMLLSATTASKSPKEHFDFFPLTIDVEERMYAAGRIPGSFFRREGRPSTDAILTCRLIDRPLRPSFVSGLRNEIQVVVTVLSLDPKDLYDVLAINAASASTQISGLPFSGPVGGVRVALIDGQWVAFPTVEQLERAVFDMVVAGRKVGDDHKDVAIMMVEAEATENVIELVAGGAGAPTETVVAEGLEAAKPFIAVLCDAQAALAGAAGKETAEYPLFPDYGDDVYYSVASVATEALSEALTIAGKNERNDRTDEIKVEVLNRLAEQYAGREKEIGAAYRSLTKKLVRQRILTDHFRIDGRGVTDIRALSAEVAVVPRAHGSALFERGETQIMGVTTLDMVKMAQQIDSLGPETSKRYMHHYNFPPYSTGETGRVGSPKRREIGHGALAERALVPVLPSVEEFPYAIRQVSEALGSNGSTSMGSVCASTLSLLNAGVPLKAPVAGIAMGLVSDDIEIDGKTERRFVTLTDILGAEDAFGDMDFKCAGTKDFVTALQLDTKLDGIPSQVLAGALAQAKDARITILEVMAEAIDTPDEMSPYAPRITTIKVPVDKIGEVIGPKGKMINSITEETGASISIEDDGTVFVGASNGEAAQAAIDKINAIANPQLPKVGERFLGTVVKTTDFGAFVSLLPGRDGLVHISKLGRGKRINKVEDVAKVGDKLRVEIADIDNRGKISLVLVAEESETAADAPADAPVDAATTSS.

Mg(2+) contacts are provided by D525 and D531. The 60-residue stretch at 591 to 650 (PRITTIKVPVDKIGEVIGPKGKMINSITEETGASISIEDDGTVFVGASNGEAAQAAIDKI) folds into the KH domain. Positions 662–731 (GERFLGTVVK…NRGKISLVLV (70 aa)) constitute an S1 motif domain.

The protein belongs to the polyribonucleotide nucleotidyltransferase family. Mg(2+) serves as cofactor.

The protein resides in the cytoplasm. It catalyses the reaction RNA(n+1) + phosphate = RNA(n) + a ribonucleoside 5'-diphosphate. Involved in mRNA degradation. Catalyzes the phosphorolysis of single-stranded polyribonucleotides processively in the 3'- to 5'-direction. This chain is Polyribonucleotide nucleotidyltransferase, found in Mycolicibacterium vanbaalenii (strain DSM 7251 / JCM 13017 / BCRC 16820 / KCTC 9966 / NRRL B-24157 / PYR-1) (Mycobacterium vanbaalenii).